We begin with the raw amino-acid sequence, 143 residues long: Cold shock domain-containing protein CG9705 (143 aa).

The interval 1–30 is disordered; that stretch reads MTEPRTPEKLLAAKPPVLHHNSHSPNASLQ. Residues S22, S24, S28, and S33 each carry the phosphoserine modification. The CSD domain maps to 54–121; sequence VVTGMVKSFS…KHQAVHVQIS (68 aa). S139 and S140 each carry phosphoserine.

This is Cold shock domain-containing protein CG9705 from Drosophila melanogaster (Fruit fly).